Consider the following 159-residue polypeptide: Capsid protein (159 aa).

S2 bears the N-acetylserine; by host mark.

The protein belongs to the virgaviridae capsid protein family.

Its subcellular location is the virion. Its function is as follows. Capsid protein self-assembles to form rod-shaped virions about 18 nm in diameter with a central canal enclosing the viral genomic RNA. The polypeptide is Capsid protein (CP) (Capsicum (peppers)).